The chain runs to 535 residues: Arylsulfatase K (535 aa).

The first 21 residues, 1–21, serve as a signal peptide directing secretion; sequence MGSGGPLLLLRGLLLVGAAYC. Residues Asp41 and Cys81 each contribute to the Ca(2+) site. Cys81 functions as the Nucleophile in the catalytic mechanism. Position 81 is a 3-oxoalanine (Cys) (Cys81). Lys129 is a binding site for substrate. N-linked (GlcNAc...) asparagine glycosylation occurs at Asn194. His252 is a substrate binding site. Asn263 carries N-linked (GlcNAc...) asparagine glycosylation. Positions 314 and 315 each coordinate Ca(2+). N-linked (GlcNAc...) asparagine glycosylation is found at Asn376, Asn414, and Asn499.

It belongs to the sulfatase family. Ca(2+) is required as a cofactor. Post-translationally, the conversion to 3-oxoalanine (also known as C-formylglycine, FGly), of a serine or cysteine residue in prokaryotes and of a cysteine residue in eukaryotes, is critical for catalytic activity.

The protein resides in the secreted. It localises to the lysosome. The enzyme catalyses an aryl sulfate + H2O = a phenol + sulfate + H(+). It catalyses the reaction Hydrolysis of the 2-sulfate groups of the 2-O-sulfo-D-glucuronate residues of chondroitin sulfate, heparin and heparitin sulfate.. In terms of biological role, catalyzes the hydrolysis of pseudosubstrates such as p-nitrocatechol sulfate and p-nitrophenyl sulfate. Catalyzes the hydrolysis of the 2-sulfate groups of the 2-O-sulfo-D-glucuronate residues of chondroitin sulfate, heparin and heparitin sulfate. Acts selectively on 2-sulfoglucuronate and lacks activity against 2-sulfoiduronate. The sequence is that of Arylsulfatase K (ARSK) from Gallus gallus (Chicken).